We begin with the raw amino-acid sequence, 341 residues long: MSDVVSKDRKALFDSAVSFLKDESIKDAPLLKKIEFLKSKGLTEKEIEIAMKEPKKDGIVGDEVSKKIGSTENRASQDMYLYEAMPPTLPHRDWKDYFVMATATAGLLYGAYEVTRRYVIPNILPEAKSKLEGDKKEIDDQFSKIDTVLNAIEAEQAEFRKKESETLKELSDTIAELKQALVQTTRSREKIEDEFRIVKLEVVNMQNTIDKFVSDNDGMQELNNIQKEMESLKSLMNNRMESGNAQDNRLFSISPNGIPGIDTIPSASEILAKMGMQEESDKEKENGSDANKDDNAVPAWKKAREQTIDSNASIPEWQKNTAANEISVPDWQNGQVEDSIP.

Ser-2 carries the post-translational modification N-acetylserine. Residues Pro-86 to Trp-94 carry the SH3-binding motif. The segment at Met-276–Pro-341 is disordered. Positions Glu-279–Asn-295 are enriched in basic and acidic residues. Positions Ile-308–Pro-341 are enriched in polar residues. Ser-313 is subject to Phosphoserine.

Belongs to the peroxin-14 family. In terms of assembly, interacts with PEX13 (via SH3 domain); forming the PEX13-PEX14 docking complex. Interacts with PEX5 (via WxxxF/Y motifs). Interacts with PEX7. Interacts with PEX9.

Its subcellular location is the peroxisome membrane. Its function is as follows. Component of the PEX13-PEX14 docking complex, a translocon channel that specifically mediates the import of peroxisomal cargo proteins bound to PEX5 or PEX21 receptors. The PEX13-PEX14 docking complex forms a large import pore which can be opened to a diameter of about 9 nm. Mechanistically, PEX5 (or PEX21) receptor along with cargo proteins associates with the PEX14 subunit of the PEX13-PEX14 docking complex in the cytosol, leading to the insertion of the receptor into the organelle membrane with the concomitant translocation of the cargo into the peroxisome matrix. The chain is Peroxisomal membrane protein PEX14 from Saccharomyces cerevisiae (strain ATCC 204508 / S288c) (Baker's yeast).